Consider the following 378-residue polypeptide: Lipid-A-disaccharide synthase (378 aa).

It belongs to the LpxB family.

It carries out the reaction a lipid X + a UDP-2-N,3-O-bis[(3R)-3-hydroxyacyl]-alpha-D-glucosamine = a lipid A disaccharide + UDP + H(+). The protein operates within bacterial outer membrane biogenesis; LPS lipid A biosynthesis. Functionally, condensation of UDP-2,3-diacylglucosamine and 2,3-diacylglucosamine-1-phosphate to form lipid A disaccharide, a precursor of lipid A, a phosphorylated glycolipid that anchors the lipopolysaccharide to the outer membrane of the cell. The chain is Lipid-A-disaccharide synthase from Methylobacillus flagellatus (strain ATCC 51484 / DSM 6875 / VKM B-1610 / KT).